Here is a 197-residue protein sequence, read N- to C-terminus: dTTP/UTP pyrophosphatase (197 aa).

D70 functions as the Proton acceptor in the catalytic mechanism.

The protein belongs to the Maf family. YhdE subfamily. As to quaternary structure, homodimer. Can also form homotetramers. The cofactor is a divalent metal cation.

Its subcellular location is the cytoplasm. The enzyme catalyses dTTP + H2O = dTMP + diphosphate + H(+). It carries out the reaction UTP + H2O = UMP + diphosphate + H(+). It catalyses the reaction 5-methyl-UTP + H2O = 5-methyl-UMP + diphosphate + H(+). The catalysed reaction is psi-UTP + H2O = psi-UMP + diphosphate + H(+). The enzyme catalyses 5-methyl-CTP + H2O = 5-methyl-CMP + diphosphate + H(+). Nucleoside triphosphate pyrophosphatase that hydrolyzes dTTP and UTP. Can also hydrolyze TTP and the modified nucleotides 5-methyl-UTP (m(5)UTP), pseudo-UTP and 5-methyl-CTP (m(5)CTP). Has weak activity with CTP. May have a dual role in cell division arrest and in preventing the incorporation of modified nucleotides into cellular nucleic acids. Important in maintenance of cell shape. In Escherichia coli (strain K12), this protein is dTTP/UTP pyrophosphatase (yhdE).